Here is a 142-residue protein sequence, read N- to C-terminus: Large ribosomal subunit protein bL17 (142 aa).

Belongs to the bacterial ribosomal protein bL17 family. As to quaternary structure, part of the 50S ribosomal subunit. Contacts protein L32.

In Chlamydia abortus (strain DSM 27085 / S26/3) (Chlamydophila abortus), this protein is Large ribosomal subunit protein bL17.